The following is a 500-amino-acid chain: Abscisic acid 8'-hydroxylase 3 (500 aa).

The helical transmembrane segment at 3–23 (ASFVIVIVISFFISLAFMCYV) threads the bilayer. Heme is bound at residue Cys426.

This sequence belongs to the cytochrome P450 family. Heme is required as a cofactor.

It localises to the membrane. The catalysed reaction is 2-cis-(+)-abscisate + reduced [NADPH--hemoprotein reductase] + O2 = (+)-8'-hydroxyabscisate + oxidized [NADPH--hemoprotein reductase] + H2O + H(+). It functions in the pathway plant hormone degradation; abscisic acid degradation. Involved in the oxidative degradation of abscisic acid. In Oryza sativa subsp. indica (Rice), this protein is Abscisic acid 8'-hydroxylase 3 (CYP707A7).